The primary structure comprises 255 residues: tRNA pseudouridine synthase A (255 aa).

D52 serves as the catalytic Nucleophile. Y111 serves as a coordination point for substrate.

This sequence belongs to the tRNA pseudouridine synthase TruA family. Homodimer.

The catalysed reaction is uridine(38/39/40) in tRNA = pseudouridine(38/39/40) in tRNA. Functionally, formation of pseudouridine at positions 38, 39 and 40 in the anticodon stem and loop of transfer RNAs. This chain is tRNA pseudouridine synthase A, found in Cereibacter sphaeroides (strain KD131 / KCTC 12085) (Rhodobacter sphaeroides).